Reading from the N-terminus, the 273-residue chain is NADPH-dependent 7-cyano-7-deazaguanine reductase (273 aa).

A substrate-binding site is contributed by 80–82 (VES). Residue 82–83 (SK) participates in NADPH binding. The Thioimide intermediate role is filled by Cys-180. The active-site Proton donor is the Asp-187. Residue 219–220 (HE) participates in substrate binding. Residue 248–249 (RG) participates in NADPH binding.

This sequence belongs to the GTP cyclohydrolase I family. QueF type 2 subfamily. In terms of assembly, homodimer.

The protein resides in the cytoplasm. It catalyses the reaction 7-aminomethyl-7-carbaguanine + 2 NADP(+) = 7-cyano-7-deazaguanine + 2 NADPH + 3 H(+). Its pathway is tRNA modification; tRNA-queuosine biosynthesis. Catalyzes the NADPH-dependent reduction of 7-cyano-7-deazaguanine (preQ0) to 7-aminomethyl-7-deazaguanine (preQ1). The chain is NADPH-dependent 7-cyano-7-deazaguanine reductase from Bordetella pertussis (strain Tohama I / ATCC BAA-589 / NCTC 13251).